Here is a 130-residue protein sequence, read N- to C-terminus: Large ribosomal subunit protein uL14 (130 aa).

It belongs to the universal ribosomal protein uL14 family. As to quaternary structure, part of the 50S ribosomal subunit. Forms a cluster with proteins L3 and L19. In the 70S ribosome, L14 and L19 interact and together make contacts with the 16S rRNA in bridges B5 and B8.

Its function is as follows. Binds to 23S rRNA. Forms part of two intersubunit bridges in the 70S ribosome. In Leptospira interrogans serogroup Icterohaemorrhagiae serovar copenhageni (strain Fiocruz L1-130), this protein is Large ribosomal subunit protein uL14.